A 394-amino-acid polypeptide reads, in one-letter code: Ceramide glucosyltransferase (394 aa).

The Lumenal portion of the chain corresponds to 1–10; sequence MALLDLALEG. A helical membrane pass occupies residues 11 to 32; that stretch reads MAVFGFVLFLVLWLMHFMAIIY. Topologically, residues 33-195 are cytoplasmic; sequence TRLHLNKKAT…QVYFGTSHPR (163 aa). Position 92 (aspartate 92) is a short sequence motif, D1. Lysine 117 is subject to N6-acetyllysine. Residue aspartate 144 is a short sequence motif, D2. Residues 196 to 215 traverse the membrane as a helical segment; sequence YYISANVTGFKCVTGMSCLM. Topologically, residues 216–287 are lumenal; that stretch reads RKDVLDQAGG…KLRINMLPAT (72 aa). Position 236 (aspartate 236) is a short sequence motif, D3. The Proton acceptor role is filled by aspartate 236. Residues 272 to 276 carry the (Q/R)XXRW motif; that stretch reads RMIRW. Residues 288–304 traverse the membrane as a helical segment; that stretch reads IICEPISECFVASLIIG. At 305–309 the chain is on the cytoplasmic side; sequence WAAHH. Residues 310 to 328 traverse the membrane as a helical segment; that stretch reads VFRWDIMVFFMCHCLAWFI. Residues 329–348 are Lumenal-facing; it reads FDYIQLRGVQGGTLCFSKLD. A helical transmembrane segment spans residues 349-369; the sequence is YAVAWFIRESMTIYIFLSALW. At 370 to 394 the chain is on the cytoplasmic side; sequence DPTISWRTGRYRLRCGGTAEEILDV.

Belongs to the glycosyltransferase 2 family. In terms of assembly, interacts with RTN1; regulates the ceramide glucosyltransferase activity of UGCG. Found in all tissues examined.

It is found in the golgi apparatus membrane. The catalysed reaction is an N-acylsphing-4-enine + UDP-alpha-D-glucose = a beta-D-glucosyl-(1&lt;-&gt;1')-N-acylsphing-4-enine + UDP + H(+). The enzyme catalyses UDP-alpha-D-xylose + an N-acylsphing-4-enine = a beta-D-xylosyl-(1&lt;-&gt;1')-N-acylsphing-4-enine + UDP + H(+). It carries out the reaction N-(9Z-octadecenoyl)-sphing-4-enine + UDP-alpha-D-xylose = beta-D-xylosyl-(1&lt;-&gt;1')-N-(9Z-octadecenoyl)-sphing-4-enine + UDP + H(+). It functions in the pathway lipid metabolism; sphingolipid metabolism. Functionally, participates in the initial step of the glucosylceramide-based glycosphingolipid/GSL synthetic pathway at the cytosolic surface of the Golgi. Catalyzes the transfer of glucose from UDP-glucose to ceramide to produce glucosylceramide/GlcCer (such as beta-D-glucosyl-(1&lt;-&gt;1')-N-acylsphing-4-enine). GlcCer is the core component of glycosphingolipids/GSLs, amphipathic molecules consisting of a ceramide lipid moiety embedded in the outer leaflet of the membrane, linked to one of hundreds of different externally oriented oligosaccharide structures. Glycosphingolipids are essential components of membrane microdomains that mediate membrane trafficking and signal transduction, implicated in many fundamental cellular processes, including growth, differentiation, migration, morphogenesis, cell-to-cell and cell-to-matrix interactions. They are required for instance in the proper development and functioning of the nervous system. As an example of their role in signal transduction, they regulate the leptin receptor/LEPR in the leptin-mediated signaling pathway. They also play an important role in the establishment of the skin barrier regulating keratinocyte differentiation and the proper assembly of the cornified envelope. The biosynthesis of GSLs is also required for the proper intestinal endocytic uptake of nutritional lipids. Catalyzes the synthesis of xylosylceramide/XylCer (such as beta-D-xylosyl-(1&lt;-&gt;1')-N-acylsphing-4-enine) using UDP-Xyl as xylose donor. The sequence is that of Ceramide glucosyltransferase from Homo sapiens (Human).